The sequence spans 689 residues: Glycine--tRNA ligase beta subunit (689 aa).

The protein belongs to the class-II aminoacyl-tRNA synthetase family. As to quaternary structure, tetramer of two alpha and two beta subunits.

Its subcellular location is the cytoplasm. The enzyme catalyses tRNA(Gly) + glycine + ATP = glycyl-tRNA(Gly) + AMP + diphosphate. The chain is Glycine--tRNA ligase beta subunit from Photorhabdus laumondii subsp. laumondii (strain DSM 15139 / CIP 105565 / TT01) (Photorhabdus luminescens subsp. laumondii).